The chain runs to 334 residues: 4-hydroxy-2-methyl-3-oxo-4-farnesyl-3,4-dihydroquinoline-1-oxide ketoreductase (334 aa).

Residue Tyr-139 is the Proton donor of the active site.

This sequence belongs to the 3-beta-HSD family.

It catalyses the reaction aurachin B + NAD(+) + H2O = 4-hydroxy-2-methyl-3-oxo-4-[(2E,6E)-farnesyl]-3,4-dihydroquinoline 1-oxide + NADH. The catalysed reaction is 3,4-dihydroxy-2-methyl-4-[(2E,6E)-farnesyl]-3,4-dihydroquinoline 1-oxide + NAD(+) = 4-hydroxy-2-methyl-3-oxo-4-[(2E,6E)-farnesyl]-3,4-dihydroquinoline 1-oxide + NADH + H(+). Ketoreductase that catalyzes the final step in the conversion of aurachin C to aurachin B. Catalyzes the reduction of 4-hydroxy-2-methyl-3-oxo-4-[(2E,6E)-farnesyl]-3,4-dihydroquinoline-1-oxide to form 3,4-dihydroxy-2-methyl-4-[(2E,6E)-farnesyl]-3,4-dihydroquinoline 1-oxide, which then undergoes a spontaneous dehydration to form aurachin B. Accepts both NADH and NADPH, but has a preference for NADH. This chain is 4-hydroxy-2-methyl-3-oxo-4-farnesyl-3,4-dihydroquinoline-1-oxide ketoreductase, found in Stigmatella aurantiaca.